An 869-amino-acid polypeptide reads, in one-letter code: Speckle targeted PIP5K1A-regulated poly(A) polymerase (869 aa).

The segment at 16–46 (FRCCLCDVTTANRPSLDAHLKGRKHRDLVQL) adopts a Matrin-type zinc-finger fold. The RRM domain occupies 56 to 128 (RSVFVSGFPR…HGLRVRPREQ (73 aa)). The interval 114–144 (HSLGGHGLRVRPREQKEFQSPASKSPKGVDS) is disordered. Residue Ser205 participates in ATP binding. The Mg(2+) site is built by Asp216 and Asp218. UTP-binding residues include Asp216 and Asp218. Disordered regions lie at residues 226 to 247 (MEETEPDPKAPKVPETSSLDSA) and 259 to 335 (CTPA…ASKD). Composition is skewed to polar residues over residues 266–276 (DSLSPTSVQES) and 283–299 (TPSSLAPQTPDSALGSD). Over residues 314–335 (QEDRKEGKQGKELELAEEASKD) the composition is skewed to basic and acidic residues. Asn395 is an ATP binding site. Residues Asn395, Arg417, Tyr435, and His552 each contribute to the UTP site. The region spanning 494-552 (LSSLLAQFFSCVSCLDLSGSLLSLREGRPLMVAEGLPSDLWEGLRLGPMNLQDPFDLSH) is the PAP-associated domain. A KA1; binds the bulging loops of U6 snRNA but is dispensable for terminal uridylyltransferase activity region spans residues 601-869 (SSPSSLLSAK…IPQALKNLLK (269 aa)). Disordered stretches follow at residues 640 to 689 (QGTK…DHSE), 735 to 757 (MKPEVAGEGSQGETGKEASHPSS), 775 to 796 (ARRRLQQQTKEEGRGGPTTGAE), and 803 to 822 (RVTQELKGPNSEQERPPGEP). The span at 671 to 689 (KSFEEGKEEPQGCAGDHSE) shows a compositional bias: basic and acidic residues. A phosphoserine mark is found at Ser688 and Ser744.

Belongs to the DNA polymerase type-B-like family. As to quaternary structure, associates with the cleavage and polyadenylation specificity factor (CPSF) complex. Interacts with CPSF1 and CPSF3; the interaction is direct. Interacts with PIP5K1A. It depends on Mg(2+) as a cofactor. Requires Mn(2+) as cofactor. Post-translationally, phosphorylated by CK1 in the proline-rich (Pro-rich) region.

It is found in the nucleus. The protein resides in the nucleolus. The protein localises to the nucleus speckle. The enzyme catalyses RNA(n) + UTP = RNA(n)-3'-uridine ribonucleotide + diphosphate. It carries out the reaction RNA(n) + ATP = RNA(n)-3'-adenine ribonucleotide + diphosphate. With respect to regulation, adenylyltransferase activity is specifically phosphatidylinositol 4,5-bisphosphate (PtdIns(4,5)P2). Functionally, poly(A) polymerase that creates the 3'-poly(A) tail of specific pre-mRNAs. Localizes to nuclear speckles together with PIP5K1A and mediates polyadenylation of a select set of mRNAs, such as HMOX1. In addition to polyadenylation, it is also required for the 3'-end cleavage of pre-mRNAs: binds to the 3'UTR of targeted pre-mRNAs and promotes the recruitment and assembly of the CPSF complex on the 3'UTR of pre-mRNAs. In addition to adenylyltransferase activity, also has uridylyltransferase activity. However, the ATP ratio is higher than UTP in cells, suggesting that it functions primarily as a poly(A) polymerase. Acts as a specific terminal uridylyltransferase for U6 snRNA in vitro: responsible for a controlled elongation reaction that results in the restoration of the four 3'-terminal UMP-residues found in newly transcribed U6 snRNA. Not involved in replication-dependent histone mRNA degradation. In Mus musculus (Mouse), this protein is Speckle targeted PIP5K1A-regulated poly(A) polymerase (Tut1).